Here is a 121-residue protein sequence, read N- to C-terminus: Ribosome-binding factor A (121 aa).

The protein belongs to the RbfA family. Monomer. Binds 30S ribosomal subunits, but not 50S ribosomal subunits or 70S ribosomes.

It localises to the cytoplasm. Its function is as follows. One of several proteins that assist in the late maturation steps of the functional core of the 30S ribosomal subunit. Associates with free 30S ribosomal subunits (but not with 30S subunits that are part of 70S ribosomes or polysomes). Required for efficient processing of 16S rRNA. May interact with the 5'-terminal helix region of 16S rRNA. The chain is Ribosome-binding factor A from Paraburkholderia phytofirmans (strain DSM 17436 / LMG 22146 / PsJN) (Burkholderia phytofirmans).